The following is a 184-amino-acid chain: Ras-related protein Rap-1b (184 aa).

Position 10–18 (10–18 (GSGGVGKSA)) interacts with GTP. An interaction with KRIT1 region spans residues 25–67 (QGIFVEKYDPTIEDSYRKQVEVDAQQCMLEILDTAGTEQFTAM). The Effector region signature appears at 32–40 (YDPTIEDSY). Residue S39 is modified to ADP-ribosylserine; by botulinum toxin. GTP-binding positions include 57–61 (DTAGT), 116–119 (NKCD), and 147–149 (SAK). S179 is subject to Phosphoserine; by PKA. Cysteine methyl ester is present on C181. C181 carries the S-geranylgeranyl cysteine lipid modification. Positions 182–184 (QLL) are cleaved as a propeptide — removed in mature form.

This sequence belongs to the small GTPase superfamily. Ras family. In terms of assembly, heterodimer with RAP1GAP. Interacts with EPAC2. Interacts with SGSM1. Interacts with SGSM2. Interacts with SGSM3. Interacts with KRIT1. Interacts with RAP1GDS1.

The protein resides in the cell membrane. Its subcellular location is the cytoplasm. The protein localises to the cytosol. It is found in the cell junction. It carries out the reaction GTP + H2O = GDP + phosphate + H(+). Its activity is regulated as follows. Activated by guanine nucleotide-exchange factor (GEF) EPAC2 in a cAMP-dependent manner. GTP-binding protein that possesses intrinsic GTPase activity. Contributes to the polarizing activity of KRIT1 and CDH5 in the establishment and maintenance of correct endothelial cell polarity and vascular lumen. Required for the localization of phosphorylated PRKCZ, PARD3 and TIAM1 to the cell junction. Plays a role in the establishment of basal endothelial barrier function. This is Ras-related protein Rap-1b (Rap1b) from Rattus norvegicus (Rat).